Reading from the N-terminus, the 119-residue chain is Protein TusC (119 aa).

The protein belongs to the DsrF/TusC family. As to quaternary structure, heterohexamer, formed by a dimer of trimers. The hexameric TusBCD complex contains 2 copies each of TusB, TusC and TusD. The TusBCD complex interacts with TusE.

Its subcellular location is the cytoplasm. In terms of biological role, part of a sulfur-relay system required for 2-thiolation of 5-methylaminomethyl-2-thiouridine (mnm(5)s(2)U) at tRNA wobble positions. This chain is Protein TusC, found in Buchnera aphidicola subsp. Baizongia pistaciae (strain Bp).